The chain runs to 351 residues: Transmembrane and coiled-coil domain-containing protein 5B (351 aa).

Residues 17 to 214 are a coiled coil; the sequence is EIPKLEITKQ…WRSSIQSAKT (198 aa). Residues 292–312 traverse the membrane as a helical segment; that stretch reads IFVVMIFFRLLGYVLFYLQYI.

This sequence belongs to the TMCO5 family.

Its subcellular location is the membrane. The polypeptide is Transmembrane and coiled-coil domain-containing protein 5B (TMCO5B) (Bos taurus (Bovine)).